A 512-amino-acid chain; its full sequence is 2,3-bisphosphoglycerate-independent phosphoglycerate mutase (512 aa).

Positions 12 and 62 each coordinate Mn(2+). The active-site Phosphoserine intermediate is S62. Substrate-binding positions include H123, 153–154, R185, R191, 260–263, and K333; these read RD and RPDR. D400, H404, D441, H442, and H460 together coordinate Mn(2+).

The protein belongs to the BPG-independent phosphoglycerate mutase family. In terms of assembly, monomer. It depends on Mn(2+) as a cofactor.

It carries out the reaction (2R)-2-phosphoglycerate = (2R)-3-phosphoglycerate. Its pathway is carbohydrate degradation; glycolysis; pyruvate from D-glyceraldehyde 3-phosphate: step 3/5. Catalyzes the interconversion of 2-phosphoglycerate and 3-phosphoglycerate. This Clostridium perfringens (strain 13 / Type A) protein is 2,3-bisphosphoglycerate-independent phosphoglycerate mutase.